Here is a 304-residue protein sequence, read N- to C-terminus: MPELALLEEVVEKVRPLLGQGKVADYIPALASVDAGKLGIAVTTVDGETLGAGDYLEPFSIQSISKVFSLTLALTLYEEAEIWSRVGKEPSGHSFNSLVQVELERGKPRNPFINAGALVIADLLQSRLGAPKHRMLELVRQLSQNDKVCFDKQVADSEYQHSARNAAIAYLMKSFGNFQGDVDTVLRTYFHYCALKMNCADLSKAMLYLANRGKSITGTELISQVQTRQLNALLATSGLYDGAGEFAYRVGMPGKSGVGGGIIAVIPGELSICVWSPELDGNGNSLAGTAMLEHLSQRLGRSIF.

Substrate contacts are provided by Ser-63, Asn-114, Glu-158, Asn-165, Tyr-189, Tyr-240, and Val-258.

Belongs to the glutaminase family. In terms of assembly, homotetramer.

The enzyme catalyses L-glutamine + H2O = L-glutamate + NH4(+). This chain is Glutaminase, found in Shewanella baltica (strain OS185).